Reading from the N-terminus, the 368-residue chain is tRNA(Met) cytidine acetate ligase (368 aa).

ATP is bound by residues 7-20, Gly-96, Asn-152, and Arg-175; that span reads IAEF…HKYL.

It belongs to the TmcAL family.

Its subcellular location is the cytoplasm. It carries out the reaction cytidine(34) in elongator tRNA(Met) + acetate + ATP = N(4)-acetylcytidine(34) in elongator tRNA(Met) + AMP + diphosphate. In terms of biological role, catalyzes the formation of N(4)-acetylcytidine (ac(4)C) at the wobble position of elongator tRNA(Met), using acetate and ATP as substrates. First activates an acetate ion to form acetyladenylate (Ac-AMP) and then transfers the acetyl group to tRNA to form ac(4)C34. The polypeptide is tRNA(Met) cytidine acetate ligase (Streptococcus pyogenes serotype M5 (strain Manfredo)).